A 379-amino-acid chain; its full sequence is Oxidized polyvinyl alcohol hydrolase (379 aa).

The first 23 residues, 1–23, serve as a signal peptide directing secretion; the sequence is MNQSLGVLRLTRGVIALALASVA. Active-site charge relay system residues include Ser-203 and Ser-309.

Belongs to the peptidase S9A family. Monomer.

The catalysed reaction is nonane-4,6-dione + H2O = pentan-2-one + butanoate + H(+). In terms of biological role, catalyzes the hydrolysis of 4,6-nonanedione, a beta-diketone compound. Also mediates hydrolysis of oxidized polyvinyl alcohol (PVA) in the second step in the degradation of polyvinyl alcohol. Not active toward the monoketone structure. In Pseudomonas sp, this protein is Oxidized polyvinyl alcohol hydrolase (pvaB).